Consider the following 201-residue polypeptide: Large ribosomal subunit protein eL15B (201 aa).

A disordered region spans residues 161–182; it reads SRGLTSIGKKSRGIGKGHRYNN. The span at 169-179 shows a compositional bias: basic residues; the sequence is KKSRGIGKGHR. Residue serine 183 is modified to Phosphoserine.

It belongs to the eukaryotic ribosomal protein eL15 family. Component of the large ribosomal subunit (LSU). Mature yeast ribosomes consist of a small (40S) and a large (60S) subunit. The 40S small subunit contains 1 molecule of ribosomal RNA (18S rRNA) and at least 33 different proteins. The large 60S subunit contains 3 rRNA molecules (25S, 5.8S and 5S rRNA) and at least 46 different proteins.

It localises to the cytoplasm. The protein localises to the nucleus. The protein resides in the nucleolus. Functionally, component of the ribosome, a large ribonucleoprotein complex responsible for the synthesis of proteins in the cell. The small ribosomal subunit (SSU) binds messenger RNAs (mRNAs) and translates the encoded message by selecting cognate aminoacyl-transfer RNA (tRNA) molecules. The large subunit (LSU) contains the ribosomal catalytic site termed the peptidyl transferase center (PTC), which catalyzes the formation of peptide bonds, thereby polymerizing the amino acids delivered by tRNAs into a polypeptide chain. The nascent polypeptides leave the ribosome through a tunnel in the LSU and interact with protein factors that function in enzymatic processing, targeting, and the membrane insertion of nascent chains at the exit of the ribosomal tunnel. This Schizosaccharomyces pombe (strain 972 / ATCC 24843) (Fission yeast) protein is Large ribosomal subunit protein eL15B (rpl1502).